The following is a 766-amino-acid chain: Phosphoribosylformylglycinamidine synthase subunit PurL (766 aa).

H49 is an active-site residue. The ATP site is built by Y52 and K91. E93 provides a ligand contact to Mg(2+). Residues 94-97 (SHNH) and R116 contribute to the substrate site. H95 serves as the catalytic Proton acceptor. D117 provides a ligand contact to Mg(2+). Q240 contacts substrate. Position 268 (D268) interacts with Mg(2+). 312-314 (ESQ) is a binding site for substrate. Residues D508 and G545 each contribute to the ATP site. N546 provides a ligand contact to Mg(2+). S548 serves as a coordination point for substrate.

It belongs to the FGAMS family. In terms of assembly, monomer. Part of the FGAM synthase complex composed of 1 PurL, 1 PurQ and 2 PurS subunits.

Its subcellular location is the cytoplasm. It catalyses the reaction N(2)-formyl-N(1)-(5-phospho-beta-D-ribosyl)glycinamide + L-glutamine + ATP + H2O = 2-formamido-N(1)-(5-O-phospho-beta-D-ribosyl)acetamidine + L-glutamate + ADP + phosphate + H(+). It functions in the pathway purine metabolism; IMP biosynthesis via de novo pathway; 5-amino-1-(5-phospho-D-ribosyl)imidazole from N(2)-formyl-N(1)-(5-phospho-D-ribosyl)glycinamide: step 1/2. Functionally, part of the phosphoribosylformylglycinamidine synthase complex involved in the purines biosynthetic pathway. Catalyzes the ATP-dependent conversion of formylglycinamide ribonucleotide (FGAR) and glutamine to yield formylglycinamidine ribonucleotide (FGAM) and glutamate. The FGAM synthase complex is composed of three subunits. PurQ produces an ammonia molecule by converting glutamine to glutamate. PurL transfers the ammonia molecule to FGAR to form FGAM in an ATP-dependent manner. PurS interacts with PurQ and PurL and is thought to assist in the transfer of the ammonia molecule from PurQ to PurL. This chain is Phosphoribosylformylglycinamidine synthase subunit PurL, found in Synechococcus sp. (strain CC9902).